Reading from the N-terminus, the 118-residue chain is Sporulation protein YjcA (118 aa).

Transmembrane regions (helical) follow at residues 8–28, 62–82, and 92–112; these read IVLL…DTIM, FIGE…GFLI, and AQWL…ETLV.

This sequence belongs to the UPF0713 family.

Its subcellular location is the cell membrane. In terms of biological role, involved in sporulation. The protein is Sporulation protein YjcA (yjcA) of Bacillus subtilis (strain 168).